The chain runs to 173 residues: Large ribosomal subunit protein uL10 (173 aa).

This sequence belongs to the universal ribosomal protein uL10 family. As to quaternary structure, part of the ribosomal stalk of the 50S ribosomal subunit. The N-terminus interacts with L11 and the large rRNA to form the base of the stalk. The C-terminus forms an elongated spine to which L12 dimers bind in a sequential fashion forming a multimeric L10(L12)X complex.

Forms part of the ribosomal stalk, playing a central role in the interaction of the ribosome with GTP-bound translation factors. This Beutenbergia cavernae (strain ATCC BAA-8 / DSM 12333 / CCUG 43141 / JCM 11478 / NBRC 16432 / NCIMB 13614 / HKI 0122) protein is Large ribosomal subunit protein uL10.